A 158-amino-acid chain; its full sequence is Pathogenesis-related protein 1 (158 aa).

The protein belongs to the BetVI family.

It localises to the cytoplasm. This Asparagus officinalis (Garden asparagus) protein is Pathogenesis-related protein 1 (PR1).